A 248-amino-acid polypeptide reads, in one-letter code: Uridylate kinase (248 aa).

An ATP-binding site is contributed by 13-16; sequence KLSG. UMP is bound at residue Gly55. ATP contacts are provided by Gly56 and Arg60. UMP is bound by residues Asp75 and 136–143; that span reads TGNPYFTT. ATP-binding residues include Thr163, Tyr169, and Asp172.

It belongs to the UMP kinase family. Homohexamer.

It localises to the cytoplasm. It carries out the reaction UMP + ATP = UDP + ADP. It functions in the pathway pyrimidine metabolism; CTP biosynthesis via de novo pathway; UDP from UMP (UMPK route): step 1/1. With respect to regulation, inhibited by UTP. Its function is as follows. Catalyzes the reversible phosphorylation of UMP to UDP. The chain is Uridylate kinase from Leptospira interrogans serogroup Icterohaemorrhagiae serovar copenhageni (strain Fiocruz L1-130).